We begin with the raw amino-acid sequence, 314 residues long: Leucine-rich repeat-containing protein 59 (314 aa).

At 1–247 the chain is on the cytoplasmic side; the sequence is MNKGKIENIK…VPKAKRSICS (247 aa). LRR repeat units follow at residues 14 to 35, 38 to 60, 61 to 82, 84 to 106, and 107 to 126; these read DGNE…ELAA, KATF…CSLT, HLIK…IGQL, NLQH…SQLK, and SLKW…AKAA. Residues 146-216 are a coiled coil; the sequence is MKVLQEEAEK…AVAAQEQQKK (71 aa). 2 disordered regions span residues 165 to 197 and 212 to 237; these read REQE…KERK and EQQK…APES. Basic residues predominate over residues 215–225; sequence KKKKEEKKKKA. The chain crosses the membrane as a helical span at residues 248–268; that stretch reads LFFSLLLKLVLLLVIGVSSVV. Residues 269-314 are Lumenal-facing; sequence AVCQLTELRKEAFCIPLNVHFEETVRWAQGLDVVQQVIQKMSDLRT.

Interacts with SGO1.

The protein localises to the microsome membrane. The protein resides in the endoplasmic reticulum membrane. It localises to the nucleus envelope. In terms of biological role, required for nuclear import of FGF1. This chain is Leucine-rich repeat-containing protein 59 (lrrc59), found in Danio rerio (Zebrafish).